Here is an 80-residue protein sequence, read N- to C-terminus: MTEQEIFEKVKAVIADKLQVEPEKVTLEARFIEDLGADSLDTVELIMGLEDEFGLEISDEEAEKIRTVKDAVEYIKAKLG.

The Carrier domain maps to 4–79 (QEIFEKVKAV…DAVEYIKAKL (76 aa)). At Ser39 the chain carries O-(pantetheine 4'-phosphoryl)serine.

The protein belongs to the acyl carrier protein (ACP) family. 4'-phosphopantetheine is transferred from CoA to a specific serine of apo-ACP by AcpS. This modification is essential for activity because fatty acids are bound in thioester linkage to the sulfhydryl of the prosthetic group.

The protein resides in the cytoplasm. Its pathway is lipid metabolism; fatty acid biosynthesis. Its function is as follows. Carrier of the growing fatty acid chain in fatty acid biosynthesis. The sequence is that of Acyl carrier protein from Thermus thermophilus (strain ATCC BAA-163 / DSM 7039 / HB27).